Here is a 69-residue protein sequence, read N- to C-terminus: DNA-directed RNA polymerase subunit omega (69 aa).

Belongs to the RNA polymerase subunit omega family. The RNAP catalytic core consists of 2 alpha, 1 beta, 1 beta' and 1 omega subunit. When a sigma factor is associated with the core the holoenzyme is formed, which can initiate transcription.

The enzyme catalyses RNA(n) + a ribonucleoside 5'-triphosphate = RNA(n+1) + diphosphate. Its function is as follows. Promotes RNA polymerase assembly. Latches the N- and C-terminal regions of the beta' subunit thereby facilitating its interaction with the beta and alpha subunits. The sequence is that of DNA-directed RNA polymerase subunit omega from Exiguobacterium sp. (strain ATCC BAA-1283 / AT1b).